The sequence spans 480 residues: MTLSFTARWRDELPATYTALLPTPLKNARLIWYNDKLAQQLAIPASLFDATNGAGVWGGETLLPGMSPVAQVYSGHQFGVWAGQLGDGRGILLGEQLLADGSTLDWHLKGAGLTPYSRMGDGRAVLRSTIRESLASEAMHYLGIPTTRALSIVASDTPVQRETQETGAMLMRLAQSHMRFGHFEHFYYRREPEKVQQLADFAIRHYWPQWQDVPEKYALWFEEVAARTGRLIAEWQTVGFSHGVMNTDNMSILGLTIDYGPFGFFDDYDPGFIGNHSDHQGRYRFDNQPSVALWNLQRLAQTLTPFIEIDALNRALDRYQDALLTHYGQRMRQKLGFFTEQKDDNALLNELFSLMAREGSDYTRTFRMLSHTEQQSASSPLRDTFIDRAAFDAWFDRYRARLRTEAVDDALRQQQMQRVNPAIVLRNWLAQRAIDAAEQGDMAELHRLHEVLRQPFTDRDDDYASRPPEWGKRLEVSCSS.

The ATP site is built by G86, G88, R89, K109, D121, G122, R172, and R179. The active-site Proton acceptor is the D248. N249 and D258 together coordinate Mg(2+). D258 serves as a coordination point for ATP.

It belongs to the SELO family. The cofactor is Mg(2+). It depends on Mn(2+) as a cofactor.

It carries out the reaction L-seryl-[protein] + ATP = 3-O-(5'-adenylyl)-L-seryl-[protein] + diphosphate. The catalysed reaction is L-threonyl-[protein] + ATP = 3-O-(5'-adenylyl)-L-threonyl-[protein] + diphosphate. It catalyses the reaction L-tyrosyl-[protein] + ATP = O-(5'-adenylyl)-L-tyrosyl-[protein] + diphosphate. The enzyme catalyses L-histidyl-[protein] + UTP = N(tele)-(5'-uridylyl)-L-histidyl-[protein] + diphosphate. It carries out the reaction L-seryl-[protein] + UTP = O-(5'-uridylyl)-L-seryl-[protein] + diphosphate. The catalysed reaction is L-tyrosyl-[protein] + UTP = O-(5'-uridylyl)-L-tyrosyl-[protein] + diphosphate. In terms of biological role, nucleotidyltransferase involved in the post-translational modification of proteins. It can catalyze the addition of adenosine monophosphate (AMP) or uridine monophosphate (UMP) to a protein, resulting in modifications known as AMPylation and UMPylation. The polypeptide is Protein nucleotidyltransferase YdiU (Salmonella heidelberg (strain SL476)).